The primary structure comprises 465 residues: UDP-N-acetylmuramate--L-alanine ligase (465 aa).

112 to 118 (GTHGKTT) provides a ligand contact to ATP.

Belongs to the MurCDEF family.

It is found in the cytoplasm. It catalyses the reaction UDP-N-acetyl-alpha-D-muramate + L-alanine + ATP = UDP-N-acetyl-alpha-D-muramoyl-L-alanine + ADP + phosphate + H(+). It functions in the pathway cell wall biogenesis; peptidoglycan biosynthesis. Cell wall formation. This chain is UDP-N-acetylmuramate--L-alanine ligase, found in Janthinobacterium sp. (strain Marseille) (Minibacterium massiliensis).